Here is a 287-residue protein sequence, read N- to C-terminus: 4-hydroxybenzoate octaprenyltransferase (287 aa).

A run of 9 helical transmembrane segments spans residues 21–41 (VGIF…AKGA), 44–64 (FKIA…GCIV), 91–111 (VTEA…LVLL), 112–132 (LNRL…VYPF), 139–159 (LPQL…FAAT), 160–180 (VGHV…WPIV), 211–231 (LMIG…GWYL), 235–255 (YWFY…QFLI), and 263–283 (CFAA…GILL).

The protein belongs to the UbiA prenyltransferase family. The cofactor is Mg(2+).

The protein resides in the cell inner membrane. It catalyses the reaction all-trans-octaprenyl diphosphate + 4-hydroxybenzoate = 4-hydroxy-3-(all-trans-octaprenyl)benzoate + diphosphate. It functions in the pathway cofactor biosynthesis; ubiquinone biosynthesis. Its function is as follows. Catalyzes the prenylation of para-hydroxybenzoate (PHB) with an all-trans polyprenyl group. Mediates the second step in the final reaction sequence of ubiquinone-8 (UQ-8) biosynthesis, which is the condensation of the polyisoprenoid side chain with PHB, generating the first membrane-bound Q intermediate 3-octaprenyl-4-hydroxybenzoate. This is 4-hydroxybenzoate octaprenyltransferase from Coxiella burnetii (strain RSA 331 / Henzerling II).